The following is a 249-amino-acid chain: Cell division protein DivIB (249 aa).

Over Met1 to Arg19 the chain is Cytoplasmic. A helical membrane pass occupies residues Ile20 to Tyr40. Positions Phe41–Arg109 constitute a POTRA domain. Topologically, residues Phe41–Gln249 are extracellular.

This sequence belongs to the FtsQ/DivIB family. DivIB subfamily.

The protein localises to the cell membrane. Its function is as follows. Cell division protein that may be involved in stabilizing or promoting the assembly of the division complex. This chain is Cell division protein DivIB, found in Clostridium acetobutylicum (strain ATCC 824 / DSM 792 / JCM 1419 / IAM 19013 / LMG 5710 / NBRC 13948 / NRRL B-527 / VKM B-1787 / 2291 / W).